A 102-amino-acid polypeptide reads, in one-letter code: Small ribosomal subunit protein uS10 (102 aa).

The protein belongs to the universal ribosomal protein uS10 family. In terms of assembly, part of the 30S ribosomal subunit.

Involved in the binding of tRNA to the ribosomes. This Coprothermobacter proteolyticus (strain ATCC 35245 / DSM 5265 / OCM 4 / BT) protein is Small ribosomal subunit protein uS10.